The chain runs to 75 residues: CLAVATA3/ESR (CLE)-related protein 2 (75 aa).

Positions 1-22 (MAKLSFTFCFLLFLLLSSIAAG) are cleaved as a signal peptide. A disordered region spans residues 40-75 (PSIEATSPTVEDDQAAGSHGKSPERLSPGGPDPQHH). Hydroxyproline is present on residues proline 67 and proline 70. Proline 70 carries O-linked (Ara...) hydroxyproline glycosylation.

It belongs to the CLV3/ESR signal peptide family. In terms of assembly, interacts with the extracellular leucine-rich repeat region of CLV1. Post-translationally, the O-glycosylation (arabinosylation) of the hydroxyproline Pro-70 enhances binding affinity of the CLE2p peptide for its receptor. Mostly expressed in roots and seedlings, and, to a lower extent, in apex.

It localises to the secreted. Its subcellular location is the extracellular space. Functionally, extracellular signal peptide that regulates cell fate. May act with CLV1 as a ligand-receptor pair in a signal transduction pathway, coordinating growth between adjacent meristematic regions. The polypeptide is CLAVATA3/ESR (CLE)-related protein 2 (Arabidopsis thaliana (Mouse-ear cress)).